Consider the following 87-residue polypeptide: Small ribosomal subunit protein uS17 (87 aa).

It belongs to the universal ribosomal protein uS17 family. As to quaternary structure, part of the 30S ribosomal subunit.

In terms of biological role, one of the primary rRNA binding proteins, it binds specifically to the 5'-end of 16S ribosomal RNA. The chain is Small ribosomal subunit protein uS17 from Exiguobacterium sibiricum (strain DSM 17290 / CCUG 55495 / CIP 109462 / JCM 13490 / 255-15).